The chain runs to 208 residues: Thymidylate kinase (208 aa).

Gly-7–Ser-14 is an ATP binding site.

This sequence belongs to the thymidylate kinase family.

The enzyme catalyses dTMP + ATP = dTDP + ADP. In terms of biological role, phosphorylation of dTMP to form dTDP in both de novo and salvage pathways of dTTP synthesis. In Kosmotoga olearia (strain ATCC BAA-1733 / DSM 21960 / TBF 19.5.1), this protein is Thymidylate kinase.